The chain runs to 159 residues: Ribosomal RNA large subunit methyltransferase H (159 aa).

S-adenosyl-L-methionine-binding positions include L76, G108, and 127-132 (FSKMTL).

Belongs to the RNA methyltransferase RlmH family. As to quaternary structure, homodimer.

It is found in the cytoplasm. It catalyses the reaction pseudouridine(1915) in 23S rRNA + S-adenosyl-L-methionine = N(3)-methylpseudouridine(1915) in 23S rRNA + S-adenosyl-L-homocysteine + H(+). In terms of biological role, specifically methylates the pseudouridine at position 1915 (m3Psi1915) in 23S rRNA. This Bacillus cereus (strain ATCC 14579 / DSM 31 / CCUG 7414 / JCM 2152 / NBRC 15305 / NCIMB 9373 / NCTC 2599 / NRRL B-3711) protein is Ribosomal RNA large subunit methyltransferase H.